A 171-amino-acid polypeptide reads, in one-letter code: Transcription antitermination protein NusB (171 aa).

Belongs to the NusB family.

Functionally, involved in transcription antitermination. Required for transcription of ribosomal RNA (rRNA) genes. Binds specifically to the boxA antiterminator sequence of the ribosomal RNA (rrn) operons. This Brucella ovis (strain ATCC 25840 / 63/290 / NCTC 10512) protein is Transcription antitermination protein NusB.